Consider the following 1400-residue polypeptide: MNQEVMNLFNPQAPAQTFDSIRISIASPEKILSWSYGEIKKPETINYRTFKPERDGLFCARIFGPIKDYECLCGKYKRMKYKGIICEKCGVEVTLSRVRRERMGHIELAAPVAHIWFLKSLPSRIGTLLDMTLKDIERVLYFENYIVTEPGLTSLKEHQLLSEEEYMIAVDEFGEDQFTALIGAEAIYELLASMELEKIAADLRVDLAETTSDLKQKKLMKRLKIVENFLESGNRPEWMIMKIVPVIPPDLRPLVPLDGGRFATSDLNDLYRRVINRNNRLKRLIELRAPGIIIRNEKRMLQEAVDALFDNGRRGRVITGANKRPLKSLSDMLKGKQGRFRQNLLGKRVDYSGRSVIVTGPELKLHQCGLPKKMALELFKPFIYARLDAKGYSSTVKQAKKLVEKERPEVWDILDEVIREHPVLLNRAPTLHRLGIQAFEPTLIEGKAIQLHPLVCTAFNADFDGDQMAVHVPLSLEAQLEARVLMMSTNNILHPANGAPIIVPSQDMVLGLYYLSIVAEKEPGEGMIFADMGELQHALENKVVTLHTKIKGRFKTVDAEGNPVSKIYDTTPGRMIMGELLPKNVNVPFDICNQEMTKKNISKMIDHVYRHCGQKETVIFCDRIMQLGFAHACRAGISFGKDDMVIPESKAKIVAETEALTTEYEQQYNDGLITQGEKYNKVVDAWGKATDKITEEMMARLKAVEFDPVTGRQKQMNSVYMMSHSGARGSVNQMRQLGGMRGLMAKPSGEIIETPIISNFKEGLTVNEYFNSTHGARKGLADTALKTANSGYLTRRLVDVAQDAIISEVDCGAEIGLTMQPIVDAGQIVASIGQRVLGRTALDPILHPVTGEVIVEAGRMIEEKDVEIIEKAGIQSIRIRSALTCETRDGVCAKCYGRDLARGTPVNQGEAVGVIAAQSIGEPGTQLTMRTFHLGGTAQVVDSSYLEASYEGTVKLRNRNVVRNSDGNLVVMGRNMAVLILDATGKERAVHRVTYGSRLFVDEGDTVKRGQRIAEWDPYTRPIMTEVEGYVEFEDLVDGLSVSETADESTGITKRVVIDWRSTPRGSDLKPAMVIKDKAGKILKLSKGGDARFLLSVESILSVEPGAHVKAGDVIARLPMESAKTKDITGGLPRVAELFEARRPKDHAIIAEIDGTVRFGRDYKNKRRIIIEPNDDTIEPVEYLIPKGKPFHLQDGDVIEKGEYILDGNPAPHDILAIKGVEALASYLVNEIQEVYRLQGVLINDKHIEVIVRQMLQKVEITESGDTGYIPGDHVDRIELEEINERLIEEGKKPGSGNPVLLGITKASLQTPSFISAASFQETTRVLTEAAVAGKMDTLQGLKENVIVGRLIPAGTGGMTNQIRRIATARDELIIDERRKTSGSAEANAMLVDMTNNAAE.

Positions 71, 73, 86, and 89 each coordinate Zn(2+). Residues aspartate 462, aspartate 464, and aspartate 466 each coordinate Mg(2+). Zn(2+) is bound by residues cysteine 811, cysteine 885, cysteine 892, and cysteine 895.

The protein belongs to the RNA polymerase beta' chain family. The RNAP catalytic core consists of 2 alpha, 1 beta, 1 beta' and 1 omega subunit. When a sigma factor is associated with the core the holoenzyme is formed, which can initiate transcription. The cofactor is Mg(2+). Zn(2+) is required as a cofactor.

The enzyme catalyses RNA(n) + a ribonucleoside 5'-triphosphate = RNA(n+1) + diphosphate. DNA-dependent RNA polymerase catalyzes the transcription of DNA into RNA using the four ribonucleoside triphosphates as substrates. This Brucella suis biovar 1 (strain 1330) protein is DNA-directed RNA polymerase subunit beta'.